Reading from the N-terminus, the 989-residue chain is Phosphoenolpyruvate carboxylase (989 aa).

Residues His175 and Lys630 contribute to the active site.

Belongs to the PEPCase type 1 family. Requires Mg(2+) as cofactor.

It carries out the reaction oxaloacetate + phosphate = phosphoenolpyruvate + hydrogencarbonate. Its function is as follows. Forms oxaloacetate, a four-carbon dicarboxylic acid source for the tricarboxylic acid cycle. The polypeptide is Phosphoenolpyruvate carboxylase (Prochlorococcus marinus subsp. pastoris (strain CCMP1986 / NIES-2087 / MED4)).